The following is a 306-amino-acid chain: Agmatinase (306 aa).

His-126, Asp-149, His-151, Asp-153, Asp-230, and Asp-232 together coordinate Mn(2+).

The protein belongs to the arginase family. Agmatinase subfamily. It depends on Mn(2+) as a cofactor.

It catalyses the reaction agmatine + H2O = urea + putrescine. It functions in the pathway amine and polyamine biosynthesis; putrescine biosynthesis via agmatine pathway; putrescine from agmatine: step 1/1. Catalyzes the formation of putrescine from agmatine. The protein is Agmatinase of Escherichia coli (strain K12 / DH10B).